The following is a 293-amino-acid chain: Nucleotide-binding protein OB2468 (293 aa).

An ATP-binding site is contributed by 14–21 (GMSGAGKT). 65–68 (DLRG) serves as a coordination point for GTP.

It belongs to the RapZ-like family.

Its function is as follows. Displays ATPase and GTPase activities. This is Nucleotide-binding protein OB2468 from Oceanobacillus iheyensis (strain DSM 14371 / CIP 107618 / JCM 11309 / KCTC 3954 / HTE831).